A 407-amino-acid polypeptide reads, in one-letter code: RING-H2 finger protein ATL43 (407 aa).

Positions 1–22 (MSSSSLILLFSTLSLFLNVSLA) are cleaved as a signal peptide. The helical transmembrane segment at 57–77 (GIAVVIAVLTAFFSLTFLLLL) threads the bilayer. Residues 146–188 (CAVCLARFEPTEVLRLLPKCKHAFHVECVDTWLDAHSTCPLCR) form an RING-type; atypical zinc finger.

It belongs to the RING-type zinc finger family. ATL subfamily.

It localises to the membrane. It catalyses the reaction S-ubiquitinyl-[E2 ubiquitin-conjugating enzyme]-L-cysteine + [acceptor protein]-L-lysine = [E2 ubiquitin-conjugating enzyme]-L-cysteine + N(6)-ubiquitinyl-[acceptor protein]-L-lysine.. The protein operates within protein modification; protein ubiquitination. This Arabidopsis thaliana (Mouse-ear cress) protein is RING-H2 finger protein ATL43 (ATL43).